Reading from the N-terminus, the 270-residue chain is Regulatory protein RecX (270 aa).

It belongs to the RecX family.

It localises to the cytoplasm. In terms of biological role, modulates RecA activity. The sequence is that of Regulatory protein RecX from Bacillus cytotoxicus (strain DSM 22905 / CIP 110041 / 391-98 / NVH 391-98).